A 44-amino-acid polypeptide reads, in one-letter code: Photosystem I reaction center subunit IX (44 aa).

A helical membrane pass occupies residues 9–29 (FMRSAPIVAAIWISLTAGIII).

This sequence belongs to the PsaJ family.

The protein localises to the cellular thylakoid membrane. Functionally, may help in the organization of the PsaE and PsaF subunits. This chain is Photosystem I reaction center subunit IX, found in Prochlorococcus marinus (strain MIT 9515).